We begin with the raw amino-acid sequence, 529 residues long: Plexin domain-containing protein 2 (529 aa).

The first 30 residues, 1 to 30, serve as a signal peptide directing secretion; that stretch reads MARFPKADLAAAGVMLLCHFFTDQFQFADG. The Extracellular portion of the chain corresponds to 31–454; that stretch reads KPGDQILDWQ…AEKKGGTLHA (424 aa). A disordered region spans residues 80-104; the sequence is ASVGQDSPEPRSFTDLLLDDGQDNN. Residues N103 and N160 are each glycosylated (N-linked (GlcNAc...) asparagine). Residues 327–372 enclose the PSI domain; sequence TCLQFNRCGPCVSSQIGFNCSWCSKLQRCSSGFDRHRQDWVDSGCP. Residues 455–475 form a helical membrane-spanning segment; it reads GLIIGILILVLIVATAILVTV. The Cytoplasmic portion of the chain corresponds to 476–529; it reads YMYHHPTSAASIFFIERRPSRWPAMKFRRGSGHPAYAEVEPVGEKEGFIVSEQC. The residue at position 506 (S506) is a Phosphoserine.

The protein belongs to the plexin family. In terms of assembly, interacts with CTTN. Expressed in the endothelial cells of the stroma but not in the endothelial cells of normal colonic tissue.

It is found in the membrane. May play a role in tumor angiogenesis. In Homo sapiens (Human), this protein is Plexin domain-containing protein 2 (PLXDC2).